We begin with the raw amino-acid sequence, 162 residues long: Troponin C, skeletal muscle (162 aa).

Alanine 1 carries the post-translational modification N-acetylalanine. EF-hand domains are found at residues 17–52 (EMIA…LGQT), 53–88 (PTKE…QMKE), 93–128 (KSEE…SGES), and 129–162 (ITDE…EGVQ). Residues aspartate 30, aspartate 32, aspartate 36, glutamate 41, aspartate 66, aspartate 68, serine 70, threonine 72, glutamate 77, aspartate 106, asparagine 108, aspartate 110, tyrosine 112, glutamate 117, aspartate 142, asparagine 144, aspartate 146, lysine 148, and glutamate 153 each contribute to the Ca(2+) site.

Belongs to the troponin C family.

Functionally, troponin is the central regulatory protein of striated muscle contraction. Tn consists of three components: Tn-I which is the inhibitor of actomyosin ATPase, Tn-T which contains the binding site for tropomyosin and Tn-C. The binding of calcium to Tn-C abolishes the inhibitory action of Tn on actin filaments. This is Troponin C, skeletal muscle from Pelophylax lessonae (Pool frog).